The sequence spans 101 residues: Large ribosomal subunit protein bL21 (101 aa).

This sequence belongs to the bacterial ribosomal protein bL21 family. In terms of assembly, part of the 50S ribosomal subunit. Contacts protein L20.

This protein binds to 23S rRNA in the presence of protein L20. The sequence is that of Large ribosomal subunit protein bL21 from Corynebacterium glutamicum (strain R).